The following is a 391-amino-acid chain: Recombination and repair protein (391 aa).

60–67 is a binding site for ATP; the sequence is GPSKSFKS. The segment covering 364–374 has biased composition (basic and acidic residues); sequence KSPESKSKSAA. Positions 364 to 391 are disordered; the sequence is KSPESKSKSAADLETDLEQLSDMEEFNE. A compositionally biased stretch (acidic residues) spans 376 to 391; it reads LETDLEQLSDMEEFNE.

It belongs to the RecA family.

Important in genetic recombination, DNA repair, and replication. Possesses pairing and strand-transfer activity. Interacts with dda and gene 32 proteins. The polypeptide is Recombination and repair protein (UVSX) (Enterobacteria phage T4 (Bacteriophage T4)).